The chain runs to 100 residues: Urease subunit gamma (100 aa).

This sequence belongs to the urease gamma subunit family. Heterotrimer of UreA (gamma), UreB (beta) and UreC (alpha) subunits. Three heterotrimers associate to form the active enzyme.

The protein localises to the cytoplasm. It catalyses the reaction urea + 2 H2O + H(+) = hydrogencarbonate + 2 NH4(+). The protein operates within nitrogen metabolism; urea degradation; CO(2) and NH(3) from urea (urease route): step 1/1. The protein is Urease subunit gamma of Pseudomonas putida (strain ATCC 700007 / DSM 6899 / JCM 31910 / BCRC 17059 / LMG 24140 / F1).